Here is a 194-residue protein sequence, read N- to C-terminus: GTP cyclohydrolase 1 (194 aa).

Cys83, His86, and Cys155 together coordinate Zn(2+).

Belongs to the GTP cyclohydrolase I family. As to quaternary structure, toroid-shaped homodecamer, composed of two pentamers of five dimers.

It carries out the reaction GTP + H2O = 7,8-dihydroneopterin 3'-triphosphate + formate + H(+). It functions in the pathway cofactor biosynthesis; 7,8-dihydroneopterin triphosphate biosynthesis; 7,8-dihydroneopterin triphosphate from GTP: step 1/1. The protein is GTP cyclohydrolase 1 (folE) of Streptococcus pyogenes serotype M1.